The sequence spans 241 residues: 1-(5-phosphoribosyl)-5-[(5-phosphoribosylamino)methylideneamino] imidazole-4-carboxamide isomerase (241 aa).

D8 serves as the catalytic Proton acceptor. D130 (proton donor) is an active-site residue.

Belongs to the HisA/HisF family.

The protein localises to the cytoplasm. It catalyses the reaction 1-(5-phospho-beta-D-ribosyl)-5-[(5-phospho-beta-D-ribosylamino)methylideneamino]imidazole-4-carboxamide = 5-[(5-phospho-1-deoxy-D-ribulos-1-ylimino)methylamino]-1-(5-phospho-beta-D-ribosyl)imidazole-4-carboxamide. The protein operates within amino-acid biosynthesis; L-histidine biosynthesis; L-histidine from 5-phospho-alpha-D-ribose 1-diphosphate: step 4/9. The polypeptide is 1-(5-phosphoribosyl)-5-[(5-phosphoribosylamino)methylideneamino] imidazole-4-carboxamide isomerase (Leptospira borgpetersenii serovar Hardjo-bovis (strain L550)).